We begin with the raw amino-acid sequence, 179 residues long: Acireductone dioxygenase (179 aa).

A disordered region spans residues 1–21; sequence MVQAWYMDDSTEDQRKPHHLQ. Positions 88, 90, 94, and 133 each coordinate Fe(2+). Positions 88, 90, 94, and 133 each coordinate Ni(2+).

It belongs to the acireductone dioxygenase (ARD) family. In terms of assembly, monomer. Interacts with MMP14. Requires Fe(2+) as cofactor. The cofactor is Ni(2+).

Its subcellular location is the cytoplasm. It localises to the nucleus. It is found in the cell membrane. It carries out the reaction 1,2-dihydroxy-5-(methylsulfanyl)pent-1-en-3-one + O2 = 4-methylsulfanyl-2-oxobutanoate + formate + 2 H(+). The catalysed reaction is 1,2-dihydroxy-5-(methylsulfanyl)pent-1-en-3-one + O2 = 3-(methylsulfanyl)propanoate + CO + formate + 2 H(+). It participates in amino-acid biosynthesis; L-methionine biosynthesis via salvage pathway; L-methionine from S-methyl-5-thio-alpha-D-ribose 1-phosphate: step 5/6. In terms of biological role, catalyzes 2 different reactions between oxygen and the acireductone 1,2-dihydroxy-3-keto-5-methylthiopentene (DHK-MTPene) depending upon the metal bound in the active site. Fe-containing acireductone dioxygenase (Fe-ARD) produces formate and 2-keto-4-methylthiobutyrate (KMTB), the alpha-ketoacid precursor of methionine in the methionine recycle pathway. Ni-containing acireductone dioxygenase (Ni-ARD) produces methylthiopropionate, carbon monoxide and formate, and does not lie on the methionine recycle pathway. The sequence is that of Acireductone dioxygenase (adi1) from Xenopus tropicalis (Western clawed frog).